A 411-amino-acid polypeptide reads, in one-letter code: Peptidase T (411 aa).

His-78 serves as a coordination point for Zn(2+). The active site involves Asp-80. Residue Asp-140 participates in Zn(2+) binding. Catalysis depends on Glu-173, which acts as the Proton acceptor. 3 residues coordinate Zn(2+): Glu-174, Asp-196, and His-379.

This sequence belongs to the peptidase M20B family. It depends on Zn(2+) as a cofactor.

The protein localises to the cytoplasm. The enzyme catalyses Release of the N-terminal residue from a tripeptide.. In terms of biological role, cleaves the N-terminal amino acid of tripeptides. The polypeptide is Peptidase T (Yersinia pseudotuberculosis serotype O:3 (strain YPIII)).